The primary structure comprises 173 residues: Regulator of ribonuclease activity A (173 aa).

It belongs to the RraA family. Homotrimer. Binds to both RNA-binding sites in the C-terminal region of Rne and to RhlB.

It localises to the cytoplasm. Functionally, globally modulates RNA abundance by binding to RNase E (Rne) and regulating its endonucleolytic activity. Can modulate Rne action in a substrate-dependent manner by altering the composition of the degradosome. Modulates RNA-binding and helicase activities of the degradosome. The sequence is that of Regulator of ribonuclease activity A from Vibrio vulnificus (strain CMCP6).